A 1044-amino-acid chain; its full sequence is Integrin alpha-8 (1044 aa).

The N-terminal stretch at 1-23 (MPRRQPPRPLLLLSALLCAPASA) is a signal peptide. The Extracellular segment spans residues 24 to 991 (FNLDEEKLTV…WSTPNVSFVI (968 aa)). FG-GAP repeat units lie at residues 28 to 90 (EEKL…RCRQ), 104 to 165 (NGTR…AYAE), 170 to 222 (RNSN…ITNY), 236 to 288 (QTGV…SSDL), 289 to 354 (TFIQ…FLFR), 355 to 413 (DPQI…GLKT), and 417 to 480 (QVLN…LNPM). Asn66 is a glycosylation site (N-linked (GlcNAc...) asparagine). Cys81 and Cys88 form a disulfide bridge. The N-linked (GlcNAc...) asparagine glycan is linked to Asn104. A disulfide bond links Cys132 and Cys153. A glycan (N-linked (GlcNAc...) asparagine) is linked at Asn159. The cysteines at positions 169 and 182 are disulfide-linked. N-linked (GlcNAc...) asparagine glycosylation is present at Asn221. Glu257, Thr259, Asp261, and Glu265 together coordinate Ca(2+). Residues Asn284 and Asn293 are each glycosylated (N-linked (GlcNAc...) asparagine). 10 residues coordinate Ca(2+): Asp311, Asn313, Asp315, Leu317, Asp319, Asp377, Asn379, Asp381, Tyr383, and Asp385. Residues 437–439 (RGD) carry the Cell attachment site motif. Ca(2+) is bound by residues Asp441, Asp443, Asn445, Tyr447, and Asp449. N-linked (GlcNAc...) asparagine glycosylation is present at Asn486. Disulfide bonds link Cys489–Cys500 and Cys506–Cys562. A glycan (N-linked (GlcNAc...) asparagine) is linked at Asn587. 2 cysteine pairs are disulfide-bonded: Cys623/Cys629 and Cys695/Cys708. N-linked (GlcNAc...) asparagine glycans are attached at residues Asn701, Asn719, Asn751, Asn762, Asn818, Asn877, and Asn904. Disulfide bonds link Cys849-Cys905 and Cys910-Cys915. Residues Asn952 and Asn986 are each glycosylated (N-linked (GlcNAc...) asparagine). Residues 992–1015 (PLWVIILAIMLGLLVLAVLTLALW) traverse the membrane as a helical segment. The Cytoplasmic segment spans residues 1016–1044 (KCGFFDRARPPQDDMADREQLTNNKTTDA).

The protein belongs to the integrin alpha chain family. As to quaternary structure, heterodimer of an alpha and a beta subunit. The alpha subunit is composed of a heavy and a light chain linked by a disulfide bond. Alpha-8 associates with beta-1. Prominently expressed on axons and on cells in contact with basal laminae in embryos.

The protein localises to the membrane. It localises to the cell membrane. Integrin alpha-8/beta-1 functions in the genesis of kidney and probably of other organs by regulating the recruitment of mesenchymal cells into epithelial structures. It recognizes the sequence R-G-D in a wide array of ligands including TNC, FN1, SPP1, TGFB1, TGFB3 and VTN. NPNT is probably its functional ligand in kidney genesis. Neuronal receptor for TNC it mediates cell-cell interactions and regulates neurite outgrowth of sensory and motor neurons. The polypeptide is Integrin alpha-8 (ITGA8) (Gallus gallus (Chicken)).